The primary structure comprises 546 residues: Chaperonin GroEL (546 aa).

ATP is bound by residues 30-33 (TLGP), Lys-51, 87-91 (DGTTT), Gly-415, 479-481 (NAA), and Asp-495. Residues 525-546 (PEPKKDMPPMPGGGMGGMGGMY) are disordered. Residues 536-546 (GGGMGGMGGMY) are compositionally biased toward gly residues.

It belongs to the chaperonin (HSP60) family. In terms of assembly, forms a cylinder of 14 subunits composed of two heptameric rings stacked back-to-back. Interacts with the co-chaperonin GroES.

It localises to the cytoplasm. The enzyme catalyses ATP + H2O + a folded polypeptide = ADP + phosphate + an unfolded polypeptide.. In terms of biological role, together with its co-chaperonin GroES, plays an essential role in assisting protein folding. The GroEL-GroES system forms a nano-cage that allows encapsulation of the non-native substrate proteins and provides a physical environment optimized to promote and accelerate protein folding. The protein is Chaperonin GroEL of Solidesulfovibrio magneticus (strain ATCC 700980 / DSM 13731 / RS-1) (Desulfovibrio magneticus).